A 183-amino-acid polypeptide reads, in one-letter code: Peptidoglycan recognition protein 1 (183 aa).

The first 17 residues, 1–17, serve as a signal peptide directing secretion; it reads MLFAWAPFPALLGLADS. 3 disulfides stabilise this stretch: cysteine 18-cysteine 142, cysteine 34-cysteine 79, and cysteine 55-cysteine 61. Positions 40–168 constitute an N-acetylmuramoyl-L-alanine amidase domain; sequence KPVRYVVISH…RDVQSTLSPG (129 aa).

It belongs to the N-acetylmuramoyl-L-alanine amidase 2 family. Expressed in all regions of the brain.

It localises to the secreted. The protein resides in the cytoplasmic granule. In terms of biological role, innate immunity protein that plays several important functions in antimicrobial and antitumor defense systems. Acts as a pattern receptor that binds to murein peptidoglycans (PGN) of Gram-positive bacteria and thus provides bactericidal activity. Forms an equimolar complex with heat shock protein HSPA1A and induces programmed cell death through apoptosis and necroptosis in tumor cell lines by activating the TNFR1 receptor on the target cell membrane. In addition, acts in complex with the Ca(2+)-binding protein S100A4 as a chemoattractant able to induce lymphocyte movement. Mechanistically, this complex acts as a ligand of the chemotactic receptors CCR5 and CXCR3 which are present on the cells of the immune system. Promotes also the activation of lymphocytes that become able to kill virus-infected cells as well as tumor cells by modulating the spectrum of their target-cell specificity. Induction of cytotoxicity on monocyte surface requires interaction with TREM1 receptor. The sequence is that of Peptidoglycan recognition protein 1 (Pglyrp1) from Rattus norvegicus (Rat).